We begin with the raw amino-acid sequence, 485 residues long: Protein nucleotidyltransferase YdiU (485 aa).

ATP-binding residues include Gly-90, Gly-92, Arg-93, Lys-113, Asp-125, Gly-126, Arg-176, and Arg-183. Asp-252 (proton acceptor) is an active-site residue. Mg(2+) contacts are provided by Asn-253 and Asp-262. Asp-262 contacts ATP.

Belongs to the SELO family. It depends on Mg(2+) as a cofactor. Requires Mn(2+) as cofactor.

The catalysed reaction is L-seryl-[protein] + ATP = 3-O-(5'-adenylyl)-L-seryl-[protein] + diphosphate. It catalyses the reaction L-threonyl-[protein] + ATP = 3-O-(5'-adenylyl)-L-threonyl-[protein] + diphosphate. It carries out the reaction L-tyrosyl-[protein] + ATP = O-(5'-adenylyl)-L-tyrosyl-[protein] + diphosphate. The enzyme catalyses L-histidyl-[protein] + UTP = N(tele)-(5'-uridylyl)-L-histidyl-[protein] + diphosphate. The catalysed reaction is L-seryl-[protein] + UTP = O-(5'-uridylyl)-L-seryl-[protein] + diphosphate. It catalyses the reaction L-tyrosyl-[protein] + UTP = O-(5'-uridylyl)-L-tyrosyl-[protein] + diphosphate. Its function is as follows. Nucleotidyltransferase involved in the post-translational modification of proteins. It can catalyze the addition of adenosine monophosphate (AMP) or uridine monophosphate (UMP) to a protein, resulting in modifications known as AMPylation and UMPylation. The protein is Protein nucleotidyltransferase YdiU of Vibrio atlanticus (strain LGP32) (Vibrio splendidus (strain Mel32)).